The sequence spans 103 residues: Small ribosomal subunit protein uS10 (103 aa).

Belongs to the universal ribosomal protein uS10 family. Part of the 30S ribosomal subunit.

In terms of biological role, involved in the binding of tRNA to the ribosomes. The sequence is that of Small ribosomal subunit protein uS10 from Syntrophobacter fumaroxidans (strain DSM 10017 / MPOB).